A 547-amino-acid polypeptide reads, in one-letter code: Carboxypeptidase N subunit 2 (547 aa).

Positions 1-21 are cleaved as a signal peptide; sequence MFPGAWLCWVSLLLLARLTQP. Positions 22-49 constitute an LRRNT domain; sequence CPVGCDCFGREVFCSDEQLADIPPDIPP. Residues asparagine 74, asparagine 111, and asparagine 119 are each glycosylated (N-linked (GlcNAc...) asparagine). 12 LRR repeats span residues 98–119, 122–143, 146–167, 170–191, 194–215, 218–239, 242–263, 266–287, 290–311, 314–335, 338–359, and 362–383; these read RLQD…IFSN, SLEK…LFCH, ILES…LFQS, DLRT…AFQS, GLQM…ALGS, SLQE…LFSQ, SLEM…LFSS, NLTF…LFAH, GLLH…AFTN, RLVS…VFRN, QLVK…LFHN, and RLQL…IFDT. N-linked (GlcNAc...) asparagine glycans are attached at residues asparagine 266 and asparagine 311. Residues asparagine 348, asparagine 359, and asparagine 367 are each glycosylated (N-linked (GlcNAc...) asparagine). The LRRCT domain occupies 395 to 447; sequence NPWQCDCHLSYLTSWLRLYNNQISNTHTFCAGPAYLKGQLVPNLKQEQLICPV. N-linked (GlcNAc...) asparagine glycosylation is present at asparagine 520.

In terms of assembly, tetramer of two catalytic chains and two glycosylated inactive chains.

Its subcellular location is the secreted. The 83 kDa subunit binds and stabilizes the catalytic subunit at 37 degrees Celsius and keeps it in circulation. Under some circumstances it may be an allosteric modifier of the catalytic subunit. The chain is Carboxypeptidase N subunit 2 (Cpn2) from Mus musculus (Mouse).